Here is a 484-residue protein sequence, read N- to C-terminus: E-selectin (484 aa).

A signal peptide spans 1 to 22 (MIASQFLSALPLVLLLLRESGA). The region spanning 23 to 140 (WSYSASTETM…CSKKKLALCY (118 aa)) is the C-type lectin domain. Topologically, residues 23 to 429 (WSYSASTETM…CEAPAESKIP (407 aa)) are extracellular. Cystine bridges form between Cys-41-Cys-139, Cys-112-Cys-131, Cys-144-Cys-155, Cys-149-Cys-164, Cys-166-Cys-175, Cys-181-Cys-222, Cys-194-Cys-204, Cys-208-Cys-235, Cys-240-Cys-285, Cys-271-Cys-298, Cys-303-Cys-348, Cys-334-Cys-361, Cys-366-Cys-407, and Cys-393-Cys-420. N-linked (GlcNAc...) asparagine glycosylation is found at Asn-61, Asn-65, and Asn-79. Positions 102, 104, and 110 each coordinate Ca(2+). Residues 102–110 (EPNNKQSNE), 114–119 (EIYIKR), and 127–129 (NDE) contribute to the a carbohydrate site. Ca(2+) is bound by residues Asn-127 and Asp-128. Residues 141 to 176 (TAACTPTSCSGHGECIETINSSTCQCYPGFRGLQCE) form the EGF-like domain. An N-linked (GlcNAc...) asparagine glycan is attached at Asn-160. 4 consecutive Sushi domains span residues 179–237 (VECD…TCKA), 251–300 (VSCN…VCKA), 301–363 (VKCP…SCQV), and 364–422 (VQCS…TCEA). N-linked (GlcNAc...) asparagine glycosylation occurs at Asn-201. A glycan (N-linked (GlcNAc...) asparagine) is linked at Asn-254. 2 N-linked (GlcNAc...) asparagine glycosylation sites follow: Asn-376 and Asn-400. Residues 430–451 (LAMGLAAGGVSFMTSASFLLWL) form a helical membrane-spanning segment. Residues 452–484 (LKRLRKRAKKFVPSSSSECLQPNGSYQMPSDLI) lie on the Cytoplasmic side of the membrane.

It belongs to the selectin/LECAM family. Interacts with SELPLG/PSGL1 and PODXL2 through the sialyl Lewis X epitope. SELPLG sulfation appears not to be required for this interaction.

The protein resides in the cell membrane. Cell-surface glycoprotein having a role in immunoadhesion. Mediates in the adhesion of blood neutrophils in cytokine-activated endothelium through interaction with SELPLG/PSGL1. May have a role in capillary morphogenesis. This chain is E-selectin (SELE), found in Sus scrofa (Pig).